We begin with the raw amino-acid sequence, 257 residues long: Acetylglutamate kinase (257 aa).

Substrate is bound by residues 43–44 (GG), Arg65, and Asn157. Residues 180-185 (DVSGIL) and 208-210 (IIT) contribute to the ATP site.

This sequence belongs to the acetylglutamate kinase family. ArgB subfamily. In terms of assembly, homodimer.

The protein localises to the cytoplasm. It carries out the reaction N-acetyl-L-glutamate + ATP = N-acetyl-L-glutamyl 5-phosphate + ADP. It participates in amino-acid biosynthesis; L-arginine biosynthesis; N(2)-acetyl-L-ornithine from L-glutamate: step 2/4. Catalyzes the ATP-dependent phosphorylation of N-acetyl-L-glutamate. This Salmonella agona (strain SL483) protein is Acetylglutamate kinase.